Here is a 162-residue protein sequence, read N- to C-terminus: uncharacterized protein (162 aa).

3 Pentapeptide repeat domains span residues 33–72 (ASLIGAQLIFVDLGGANLTRAQLDSATLKNANLALANMTE), 73–112 (VCLIYADLSNADLSGANLVGADLTNADLSGAKLGGADLRK), and 113–152 (ANLSEASLRGADLRGVNLIEANLTNTDFSEADLTGAYISD).

This is an uncharacterized protein from Synechocystis sp. (strain ATCC 27184 / PCC 6803 / Kazusa).